Here is a 338-residue protein sequence, read N- to C-terminus: Taste receptor type 2 member 39 (338 aa).

At 1 to 30 (MLGRCFPPDTKEKQQLRMTKLCDPAESELS) the chain is on the extracellular side. A helical membrane pass occupies residues 31–51 (PFLITLILAVLLAEYLIGIIA). Over 52–74 (NGFIMAIHAAEWVQNKAVSTSGR) the chain is Cytoplasmic. A helical membrane pass occupies residues 75–95 (ILVFLSVSRIALQSLMMLEIT). At 96-116 (ISSTSLSFYSEDAVYYAFKIS) the chain is on the extracellular side. The chain crosses the membrane as a helical span at residues 117 to 137 (FIFLNFCSLWFAAWLSFFYFV). At 138–156 (KIANFSYPLFLKLRWRITG) the chain is on the cytoplasmic side. Residues 157 to 177 (LIPWLLWLSVFISFSHSMFCI) form a helical membrane-spanning segment. Over 178–205 (NICTVYCNNSFPIHSSNSTKKTYLSEIN) the chain is Extracellular. N-linked (GlcNAc...) asparagine glycans are attached at residues asparagine 185 and asparagine 194. The chain crosses the membrane as a helical span at residues 206-226 (VVGLAFFFNLGIVTPLIMFIL). Over 227-262 (TATLLILSLKRHTLHMGSNATGSNDPSMEAHMGAIK) the chain is Cytoplasmic. The helical transmembrane segment at 263–283 (AISYFLILYIFNAVALFIYLS) threads the bilayer. Over 284-291 (NMFDINSL) the chain is Extracellular. The helical transmembrane segment at 292-312 (WNNLCQIIMAAYPAGHSILPI) threads the bilayer. Topologically, residues 313-338 (QDNPGLRRAWKRLQLRLHLYPKEWTL) are cytoplasmic.

It belongs to the G-protein coupled receptor T2R family.

Its subcellular location is the membrane. Its function is as follows. Receptor that may play a role in the perception of bitterness and is gustducin-linked. May play a role in sensing the chemical composition of the gastrointestinal content. The activity of this receptor may stimulate alpha gustducin, mediate PLC-beta-2 activation and lead to the gating of TRPM5. In Pan paniscus (Pygmy chimpanzee), this protein is Taste receptor type 2 member 39 (TAS2R39).